A 1550-amino-acid chain; its full sequence is Adhesion G protein-coupled receptor L3 (1550 aa).

An N-terminal signal peptide occupies residues 1-19 (MCPPQLFILMMLLAPVVHG). At 20 to 948 (GKHNERHPAL…VHDLLLDVIT (929 aa)) the chain is on the extracellular side. The segment at 34-80 (RHAEHSPGGPLPPRHLLQQPAAERSTAHRGQGPRGTARGVRGPGAPG) is disordered. In terms of domain architecture, SUEL-type lectin spans 103 to 192 (SCESYPIELR…KYLEVQYECV (90 aa)). 5 cysteine pairs are disulfide-bonded: Cys-104–Cys-134, Cys-113–Cys-191, Cys-146–Cys-178, Cys-159–Cys-165, and Cys-203–Cys-385. N-linked (GlcNAc...) asparagine glycosylation is present at Asn-161. An Olfactomedin-like domain is found at 202–461 (LCPGLLKGVY…VVKYSLDFGP (260 aa)). The interaction with FLRT3 stretch occupies residues 317 to 347 (YHDTSPYRWGGKSDIDLAVDENGLWVIYATE). The Ca(2+) site is built by Asp-332, Asn-380, Ala-381, and Val-435. Residues 518–538 (NLGRSTTPSLPGRRNRSTSTP) are disordered. N-linked (GlcNAc...) asparagine glycans are attached at residues Asn-532, Asn-616, Asn-839, Asn-884, and Asn-910. Residues 755–934 (DIVRENTDNI…AVLMAHVEVK (180 aa)) form the GAIN-B domain. 2 disulfide bridges follow: Cys-885–Cys-916 and Cys-904–Cys-918. The interval 885–934 (CSFWSYSKRTMTGYWSTQGCRLLTTNKTHTTCSCNHLTNFAVLMAHVEVK) is GPS. The interval 922-938 (TNFAVLMAHVEVKHSDA) is stachel. Residues 949–969 (WVGILLSLVCLLICIFTFCFF) traverse the membrane as a helical segment. Residues 970-977 (RGLQSDRN) are Cytoplasmic-facing. A helical membrane pass occupies residues 978–998 (TIHKNLCISLFVAELLFLIGI). N-linked (GlcNAc...) asparagine glycosylation occurs at Asn-999. Residues 999-1006 (NRTDQPIA) lie on the Extracellular side of the membrane. Residues 1007–1027 (CAVFAALLHFFFLAAFTWMFL) form a helical membrane-spanning segment. The Cytoplasmic segment spans residues 1028–1048 (EGVQLYIMLVEVFESEHSRRK). A helical transmembrane segment spans residues 1049–1069 (YFYLVGYGMPALIVAVSAAVD). Over 1070–1087 (YRSYGTDKVCWLRLDTYF) the chain is Extracellular. The helical transmembrane segment at 1088-1108 (IWSFIGPATLIIMLNVIFLGI) threads the bilayer. At 1109–1141 (ALYKMFHHTAILKPESGCLDNINYEDNRPFIKS) the chain is on the cytoplasmic side. Residues 1142-1162 (WVIGAIALLCLLGLTWAFGLM) form a helical membrane-spanning segment. Topologically, residues 1163-1168 (YINEST) are extracellular. The N-linked (GlcNAc...) asparagine glycan is linked to Asn-1165. A helical membrane pass occupies residues 1169–1189 (VIMAYLFTIFNSLQGMFIFIF). Residues 1190–1550 (HCVLQKKVRK…KGPAHLVTSL (361 aa)) lie on the Cytoplasmic side of the membrane. Residues 1213-1236 (KSTESSIGSGKTSGSRTPGRYSTG) are disordered. Ser-1253 bears the Phosphoserine mark. Disordered stretches follow at residues 1410 to 1435 (LLPP…PQDH) and 1528 to 1550 (PPNK…VTSL). Ser-1535 carries the phosphoserine modification. A PDZ-binding motif is present at residues 1545–1550 (HLVTSL).

Belongs to the G-protein coupled receptor 2 family. LN-TM7 subfamily. In terms of assembly, heterodimer of 2 chains generated by proteolytic processing; the large extracellular N-terminal fragment and the membrane-bound C-terminal fragment predominantly remain associated and non-covalently linked. Interacts (via olfactomedin-like domain) with FLRT1 (via extracellular domain). Interacts (via olfactomedin-like domain) with FLRT2 (via extracellular domain). Interacts (via olfactomedin-like domain) with FLRT3 (via extracellular domain); the interaction is direct. Interacts (via extracellular domain) with TENM1. Interacts (via extracellular domain) with TENM2. Interacts (via extracellular domain) with TENM3. Identified in a complex with FLRT3 and UNC5B; does not interact with UNC5B by itself. Identified in a complex with FLRT3 and UNC5D; does not interact with UNC5D by itself. As to quaternary structure, interacts (via PDZ-binding motif) with SHANK3. Interacts (via PDZ-binding motif) with DLG4. In terms of processing, autoproteolytically processed at the GPS region of the GAIN-B domain; this cleavage modulates receptor activity. As to expression, predominantly expressed in brain, followed by heart, placenta, pancreas, kidney and testis.

It is found in the cell membrane. The protein resides in the postsynaptic cell membrane. Its subcellular location is the cell projection. The protein localises to the axon. It localises to the cell junction. With respect to regulation, forms a heterodimer of 2 chains generated by proteolytic processing that remain associated through non-covalent interactions mediated by the GAIN-B domain. In the inactivated receptor, the Stachel sequence (also named stalk) is embedded in the GAIN-B domain, where it adopts a beta-strand conformation. On activation, the Stachel moves into the 7 transmembrane region and adopts a twisted hook-shaped configuration that forms contacts within the receptor, leading to coupling of a G-alpha protein, which activates signaling. The cleaved GAIN-B and N-terminal domains can then dissociate from the rest of the receptor. Its function is as follows. Orphan adhesion G-protein coupled receptor (aGPCR), which mediates synapse specificity. Ligand binding causes a conformation change that triggers signaling via guanine nucleotide-binding proteins (G proteins) and modulates the activity of downstream effectors. ADGRL3 is coupled with different classes of G alpha proteins, such as G(12)/G(13), G(s), G(i) or G(q), depending on the context. Coupling to G(12)/G(13) G proteins, which mediates the activation Rho small GTPases is the most efficient. Following G-protein coupled receptor activation, associates with cell adhesion molecules that are expressed at the surface of adjacent cells to direct synapse specificity. Specifically mediates the establishment of Schaffer-collateral synapses formed by CA3-region axons on CA1-region pyramidal neurons in the hippocampus. Localizes to postsynaptic spines in excitatory synapses in the S.oriens and S.radiatum and interacts with presynaptic cell adhesion molecules FLRT3 and TENM2, promoting synapse formation. Plays a role in the development of glutamatergic synapses in the cortex. Important in determining the connectivity rates between the principal neurons in the cortex. In terms of biological role, orphan adhesion G-protein coupled receptor (aGPCR), which mediates synapse specificity. Ligand binding causes a conformation change that triggers signaling via guanine nucleotide-binding proteins (G proteins) and modulates the activity of downstream effectors, such as adenylate cyclase. Isoform 1 is specifically coupled to G(s) G proteins and mediates activation of adenylate cyclase activity. Following G-protein coupled receptor activation, undergoes liquid-liquid phase transition, associates with (1) cell adhesion molecules that are expressed at the surface of adjacent cells, as well as (2) PDZ-containing proteins, such as SHANK3 and DLG4, in the cytoplasm to direct synapse formation. This Rattus norvegicus (Rat) protein is Adhesion G protein-coupled receptor L3.